A 112-amino-acid chain; its full sequence is Small ribosomal subunit protein uS17 (112 aa).

Belongs to the universal ribosomal protein uS17 family. In terms of assembly, part of the 30S ribosomal subunit.

One of the primary rRNA binding proteins, it binds specifically to the 5'-end of 16S ribosomal RNA. This chain is Small ribosomal subunit protein uS17, found in Thermotoga neapolitana (strain ATCC 49049 / DSM 4359 / NBRC 107923 / NS-E).